A 290-amino-acid polypeptide reads, in one-letter code: ATP synthase gamma chain (290 aa).

Belongs to the ATPase gamma chain family. In terms of assembly, F-type ATPases have 2 components, CF(1) - the catalytic core - and CF(0) - the membrane proton channel. CF(1) has five subunits: alpha(3), beta(3), gamma(1), delta(1), epsilon(1). CF(0) has three main subunits: a, b and c.

The protein localises to the cell membrane. Its function is as follows. Produces ATP from ADP in the presence of a proton gradient across the membrane. The gamma chain is believed to be important in regulating ATPase activity and the flow of protons through the CF(0) complex. This chain is ATP synthase gamma chain, found in Roseiflexus castenholzii (strain DSM 13941 / HLO8).